We begin with the raw amino-acid sequence, 173 residues long: Regulatory protein RecX (173 aa).

This sequence belongs to the RecX family.

It is found in the cytoplasm. Its function is as follows. Modulates RecA activity. The sequence is that of Regulatory protein RecX from Mycobacterium marinum (strain ATCC BAA-535 / M).